Consider the following 452-residue polypeptide: Probable ECA polymerase (452 aa).

11 helical membrane passes run Phe6–Phe26, Val37–Leu57, Val63–Gly83, Val118–Leu138, Gly155–Leu175, Ala181–Gly201, Ile207–Trp227, Met228–Tyr248, Leu341–Ile361, Tyr378–Ala398, and Val410–Phe430.

The protein belongs to the WzyE family. In terms of assembly, probably part of a complex composed of WzxE, WzyE and WzzE.

It localises to the cell inner membrane. Its pathway is bacterial outer membrane biogenesis; enterobacterial common antigen biosynthesis. In terms of biological role, probably involved in the polymerization of enterobacterial common antigen (ECA) trisaccharide repeat units. This chain is Probable ECA polymerase, found in Salmonella choleraesuis (strain SC-B67).